The chain runs to 85 residues: Large ribosomal subunit protein bL27 (85 aa).

Residues 1 to 10 (MAQKKGGGST) are compositionally biased toward gly residues. Positions 1 to 21 (MAQKKGGGSTRNGRDSQPKML) are disordered.

Belongs to the bacterial ribosomal protein bL27 family.

The sequence is that of Large ribosomal subunit protein bL27 from Leptothrix cholodnii (strain ATCC 51168 / LMG 8142 / SP-6) (Leptothrix discophora (strain SP-6)).